The primary structure comprises 294 residues: Acetylglutamate kinase (294 aa).

Substrate contacts are provided by residues 69–70 (GG), Arg91, and Asn190.

It belongs to the acetylglutamate kinase family. ArgB subfamily.

The protein resides in the cytoplasm. The catalysed reaction is N-acetyl-L-glutamate + ATP = N-acetyl-L-glutamyl 5-phosphate + ADP. The protein operates within amino-acid biosynthesis; L-arginine biosynthesis; N(2)-acetyl-L-ornithine from L-glutamate: step 2/4. In terms of biological role, catalyzes the ATP-dependent phosphorylation of N-acetyl-L-glutamate. This chain is Acetylglutamate kinase, found in Mycobacterium bovis (strain ATCC BAA-935 / AF2122/97).